The primary structure comprises 382 residues: tRNA-queuosine alpha-mannosyltransferase (382 aa).

This sequence belongs to the glycosyltransferase group 1 family. Glycosyltransferase 4 subfamily.

The protein localises to the cytoplasm. It localises to the nucleus. It carries out the reaction queuosine(34) in tRNA(Asp) + GDP-alpha-D-mannose = O-4''-alpha-D-mannosylqueuosine(34) in tRNA(Asp) + GDP + H(+). Its function is as follows. Glycosyltransferase that specifically catalyzes mannosylation of cytoplasmic tRNA(Asp) modified with queuosine at position 34 (queuosine(34)). Mannosylates the cyclopentene moiety of queuosine(34) in tRNA(Asp) to form mannosyl-queuosine(34). Mannosylation of queuosine(34) in tRNA(Asp) is required to slow-down elongation at cognate codons, GAC and GAU, thereby regulating protein translation. The sequence is that of tRNA-queuosine alpha-mannosyltransferase (GTDC1) from Gallus gallus (Chicken).